Here is a 325-residue protein sequence, read N- to C-terminus: Eukaryotic translation initiation factor 3 subunit I (325 aa).

WD repeat units follow at residues 8–47 (GHER…RLGT), 50–91 (GHTG…ALLQ), 144–183 (CSES…IVNS), 186–225 (EHSK…HQKT), and 283–324 (GHFG…FEFE).

Belongs to the eIF-3 subunit I family. In terms of assembly, component of the eukaryotic translation initiation factor 3 (eIF-3) complex, which is composed of 13 subunits: eif3a, eif3b, eif3c, eif3d, eif3e, eif3f, eif3g, eif3h, eif3i, eif3j, eif3k, eif3l and eif3m.

It is found in the cytoplasm. In terms of biological role, component of the eukaryotic translation initiation factor 3 (eIF-3) complex, which is involved in protein synthesis of a specialized repertoire of mRNAs and, together with other initiation factors, stimulates binding of mRNA and methionyl-tRNAi to the 40S ribosome. The eIF-3 complex specifically targets and initiates translation of a subset of mRNAs involved in cell proliferation. This chain is Eukaryotic translation initiation factor 3 subunit I (eif3i), found in Xenopus laevis (African clawed frog).